The chain runs to 328 residues: Peroxisomal adenine nucleotide transporter 1 (328 aa).

The next 6 helical transmembrane spans lie at 1 to 21 (MLTL…NIAV), 78 to 98 (TVTT…YTFI), 128 to 148 (LVLG…MAVV), 185 to 202 (LRTG…YASF), 226 to 246 (FILG…LIVA), and 277 to 297 (WKGV…LFAF). 3 Solcar repeats span residues 1 to 101 (MLTL…IRKS), 122 to 208 (PSTI…LKEV), and 220 to 304 (LSAV…LTKS).

This sequence belongs to the mitochondrial carrier (TC 2.A.29) family.

It localises to the peroxisome membrane. Functionally, adenine nucleotide transporter involved in the uniport of ATP and adenine nucleotide hetero-exchange transport between the cytosol and the peroxisomal lumen. This transport is accompanied by a proton transport from the peroxisomal lumen to the cytosol. Transport of ATP into the peroxisome is required for beta-oxidation of medium-chain fatty acids. Required for growth on medium-chain fatty acids, pH gradient formation in peroxisomes and for normal peroxisome proliferation. The chain is Peroxisomal adenine nucleotide transporter 1 (ANT1) from Saccharomyces cerevisiae (strain ATCC 204508 / S288c) (Baker's yeast).